Consider the following 954-residue polypeptide: E3 ubiquitin-protein ligase arkadia (954 aa).

Residues 50-66 are compositionally biased toward polar residues; that stretch reads LCSDTNKQQRDLNSNGT. Disordered stretches follow at residues 50 to 175 and 193 to 276; these read LCSD…VSSL and RKRF…SGGM. 2 stretches are compositionally biased toward low complexity: residues 112–131 and 232–251; these read SSFS…GDSD and SSSS…SSST. The SUMO interaction motif 1 (SIM) motif lies at 280–284; the sequence is VVVIE. The SUMO interaction motif 2 (SIM) motif lies at 305 to 311; the sequence is EVEIVTV. 3 disordered regions span residues 318-346, 364-452, and 485-509; these read RTTL…RNRV, TVDE…MPRL, and HFPH…SFRD. Residues 328 to 337 are compositionally biased toward polar residues; sequence WGQNTQSGRT. Residues 360–364 carry the SUMO interaction motif 3 (SIM) motif; the sequence is VVDLT. Low complexity predominate over residues 385 to 395; sequence VSTVSSNTSTS. Residues 485–496 show a composition bias toward basic residues; sequence HFPHHHHHHHQS. The interval 867-869 is ubiquitin binding; that stretch reads YPH. Positions 902 and 905 each coordinate Zn(2+). Residues 902 to 943 form an RING-type; atypical zinc finger; the sequence is CTICLSILEEGEDVRRLPCMHLFHQVCVDQWLITNKKCPICR. The ubiquitin binding stretch occupies residues 917 to 921; that stretch reads RLPCM. Zn(2+) is bound by residues H925 and C928.

Belongs to the Arkadia family. As to quaternary structure, monomer.

It is found in the nucleus. It localises to the cytoplasm. The protein localises to the PML body. It carries out the reaction S-ubiquitinyl-[E2 ubiquitin-conjugating enzyme]-L-cysteine + [acceptor protein]-L-lysine = [E2 ubiquitin-conjugating enzyme]-L-cysteine + N(6)-ubiquitinyl-[acceptor protein]-L-lysine.. It functions in the pathway protein modification; protein ubiquitination. Its activity is regulated as follows. Binds free ubiquitin non-covalently via its RING-type zinc finger. Ubiquitin-binding leads to enhance the E3 ubiquitin-protein ligase activity by stabilizing the ubiquitin-conjugating enzyme E2 (donor ubiquitin) in the 'closed' conformation and activating ubiquitin transfer. In terms of biological role, E3 ubiquitin-protein ligase required for mesoderm patterning during embryonic development. Acts as an enhancer of the transcriptional responses of the smad2/smad3 effectors, which are activated downstream of BMP. Acts by mediating ubiquitination and degradation of SMAD inhibitors such as smad7, inducing their proteasomal degradation and thereby enhancing the transcriptional activity of TGF-beta and BMP. Specifically binds polysumoylated chains via SUMO interaction motifs (SIMs) and mediates ubiquitination of sumoylated substrates. The regulation of the BMP-SMAD signaling is however independent of sumoylation and is not dependent of SUMO interaction motifs (SIMs). The sequence is that of E3 ubiquitin-protein ligase arkadia (rnf111) from Xenopus tropicalis (Western clawed frog).